The following is a 232-amino-acid chain: Cytidylate kinase (232 aa).

19–27 (GPAGVGKTT) is an ATP binding site.

It belongs to the cytidylate kinase family. Type 1 subfamily.

The protein localises to the cytoplasm. The catalysed reaction is CMP + ATP = CDP + ADP. It catalyses the reaction dCMP + ATP = dCDP + ADP. This Nitratidesulfovibrio vulgaris (strain DP4) (Desulfovibrio vulgaris) protein is Cytidylate kinase.